The primary structure comprises 271 residues: Thiazole synthase (271 aa).

Catalysis depends on K104, which acts as the Schiff-base intermediate with DXP. 1-deoxy-D-xylulose 5-phosphate-binding positions include G165, 192-193 (AG), and 214-215 (NT).

The protein belongs to the ThiG family. Homotetramer. Forms heterodimers with either ThiH or ThiS.

The protein resides in the cytoplasm. It catalyses the reaction [ThiS sulfur-carrier protein]-C-terminal-Gly-aminoethanethioate + 2-iminoacetate + 1-deoxy-D-xylulose 5-phosphate = [ThiS sulfur-carrier protein]-C-terminal Gly-Gly + 2-[(2R,5Z)-2-carboxy-4-methylthiazol-5(2H)-ylidene]ethyl phosphate + 2 H2O + H(+). The protein operates within cofactor biosynthesis; thiamine diphosphate biosynthesis. Its function is as follows. Catalyzes the rearrangement of 1-deoxy-D-xylulose 5-phosphate (DXP) to produce the thiazole phosphate moiety of thiamine. Sulfur is provided by the thiocarboxylate moiety of the carrier protein ThiS. In vitro, sulfur can be provided by H(2)S. This is Thiazole synthase from Burkholderia lata (strain ATCC 17760 / DSM 23089 / LMG 22485 / NCIMB 9086 / R18194 / 383).